The sequence spans 538 residues: Zinc finger protein 155 (538 aa).

One can recognise a KRAB domain in the interval 8–78 (VTFKDVAVVF…GTATQREGNS (71 aa)). 11 consecutive C2H2-type zinc fingers follow at residues 176–198 (YTCDECGKSICYISALHVHQRVH), 204–226 (FMCDVCGKEFSQSSHLQTHQRVH), 232–254 (FKCEQCGKGFSRRSALNVHRKLH), 260–282 (YICEACGKAFIHDSQLKEHKRIH), 288–310 (FKCDICGKTFYFRSRLKSHSMVH), 316–338 (FRCDTCDKSFHQRSALNRHCMVH), 344–366 (YRCEQCGKGFIGRLDFYKHQVVH), 372–394 (YNCKECGKSFRWSSCLLNHQRVH), 400–422 (FKCEECGKGFYTNSQLSSHQRSH), 428–450 (YKCEECGKGYVTKFNLDLHQRVH), and 456–478 (YNCKECGKNFSRASSILNHKRLH). A C2H2-type 12; degenerate zinc finger spans residues 484 to 506 (FKCEDCGKRLVHRTYRKDQPRDY).

The protein belongs to the krueppel C2H2-type zinc-finger protein family.

The protein localises to the nucleus. In terms of biological role, may be involved in transcriptional regulation. This chain is Zinc finger protein 155 (ZNF155), found in Homo sapiens (Human).